The chain runs to 812 residues: Leucine-rich repeat-containing protein 41 (812 aa).

The interval 45–54 (ALFELCGRAV) is interaction with Elongin BC complex. Residues Ser155, Ser276, and Ser326 each carry the phosphoserine modification. Positions 267–408 (GEASRGRAPS…GARTRQGPGA (142 aa)) are disordered. Thr327 is modified (phosphothreonine). The segment covering 354 to 381 (TKRSPSAPAATSSASSSTSSYKRAPASS) has biased composition (low complexity). Ser357 and Ser373 each carry phosphoserine. The span at 387–401 (PLKRFKRAAGKKGAR) shows a compositional bias: basic residues. LRR repeat units lie at residues 487–507 (WVSL…IFRL), 518–530 (AGCR…LSDL), 531–555 (FSPL…VLSI), 613–635 (SGSL…FGLV), 636–659 (LQTL…LADC), 701–728 (NSTL…VFSE), and 731–752 (SSSL…LLEF).

In terms of assembly, part of an E3 ubiquitin-protein ligase complex with Elongin BC (ELOB and ELOC), RBX1 and CUL5. Component of a probable ECS(LRRC41) complex which contains CUL5, RNF7/RBX2, Elongin BC and LRRC41. Interacts with CUL5, RNF7, ELOB and ELOC.

The protein operates within protein modification; protein ubiquitination. In terms of biological role, probable substrate recognition component of an ECS (Elongin BC-CUL2/5-SOCS-box protein) E3 ubiquitin ligase complex which mediates the ubiquitination and subsequent proteasomal degradation of target proteins. This chain is Leucine-rich repeat-containing protein 41 (LRRC41), found in Homo sapiens (Human).